The following is a 593-amino-acid chain: Probable serine/threonine-protein kinase fhkA (593 aa).

The tract at residues 1–24 (MSQTNYIPSTPNKSTPPSELSSTP) is disordered. The 58-residue stretch at 54-111 (ITIGRSKTCNIVVPELIVSGKHCIITRADAIENGNTNYGLLMIQDQSTNGTFINGKLI) folds into the FHA domain. One can recognise a Protein kinase domain in the interval 180-472 (YDFIKELGSG…VEQALNHPWI (293 aa)). Residues 186–194 (LGSGNFSVV) and Lys-209 contribute to the ATP site. The active-site Proton acceptor is the Asp-307.

The protein belongs to the protein kinase superfamily. CAMK Ser/Thr protein kinase family. CHK2 subfamily.

The enzyme catalyses L-seryl-[protein] + ATP = O-phospho-L-seryl-[protein] + ADP + H(+). It carries out the reaction L-threonyl-[protein] + ATP = O-phospho-L-threonyl-[protein] + ADP + H(+). This is Probable serine/threonine-protein kinase fhkA (fhkA) from Dictyostelium discoideum (Social amoeba).